The primary structure comprises 244 residues: Phosphoadenosine 5'-phosphosulfate reductase (244 aa).

The active-site Nucleophile; cysteine thiosulfonate intermediate is cysteine 239.

This sequence belongs to the PAPS reductase family. CysH subfamily.

It localises to the cytoplasm. It catalyses the reaction [thioredoxin]-disulfide + sulfite + adenosine 3',5'-bisphosphate + 2 H(+) = [thioredoxin]-dithiol + 3'-phosphoadenylyl sulfate. It participates in sulfur metabolism; hydrogen sulfide biosynthesis; sulfite from sulfate: step 3/3. Functionally, catalyzes the formation of sulfite from phosphoadenosine 5'-phosphosulfate (PAPS) using thioredoxin as an electron donor. This Salmonella heidelberg (strain SL476) protein is Phosphoadenosine 5'-phosphosulfate reductase.